The chain runs to 30 residues: Proteinase inhibitor CeKI (30 aa).

Belongs to the protease inhibitor I3 (leguminous Kunitz-type inhibitor) family.

Potent inhibitor of serine proteases plasma kallikrein, plasmin and coagulation factor XIIa. Weak inhibitor of serine proteases trypsin and coagulation factor Xa. Does not inhibit the serine proteases chymotrypsin, elastase or thrombin. Inhibits kinin release from HMW-kininogen by kallikrein in vitro. This chain is Proteinase inhibitor CeKI, found in Paubrasilia echinata (Pau Brasil).